Here is a 521-residue protein sequence, read N- to C-terminus: Cytochrome P450 monooxygenase gloO (521 aa).

Positions 1–26 (MIAALFTTNLQLGAVGVFIFALLAFA) are cleaved as a signal peptide. A heme-binding site is contributed by Cys-464.

Belongs to the cytochrome P450 family. Heme is required as a cofactor.

It functions in the pathway mycotoxin biosynthesis. In terms of biological role, cytochrome P450 monooxygenase; part of the gene cluster that mediates the biosynthesis of pneumocandins, lipohexapeptides of the echinocandin family that prevent fungal cell wall formation by non-competitive inhibition of beta-1,3-glucan synthase. The 10,12-dimethylmyristoyl side chain is synthesized by the reducing polyketide synthase gloL/GLPKS4. The thioesterase gloN/GLHYD exclusively interacts with gloL/GLPKS4 to maintain turnover of the polyketide side chain. The 10R,12S-dimethylmyristic acid is then transferred to the first thiolation domain of the nonribosomal peptide synthetase gloA/GLNRPS4 by the acyl-AMP ligase gloD/GLligase, followed by its acylation to L-ornithine to trigger elongation of the cyclic hexapeptide. L-ornithine, 4R-hydroxyl-L-proline (generated from L-proline by the dioxygenase gloF/GLOXY2), 3S-hydroxyl-L-homotyrosine (generated by gloG/GLHtyB, gloH/GLHtyA, gloI/GLHtyC, gloJ/GLHtyD and hydroxylated at C-3 by the dioxygenase gloM/GLOXY1), 3R-hydroxyl-L-glutamine (generated from L-glutamine probably by the dioxygenase gloE/GLOXY3) and 3S-hydroxyl-L-proline (generated from L-proline by the dioxygenase gloF/GLOXY2 to yield pneumocandin B0), or 3S-hydroxyl-4S-methyl-L-proline (generated from L-leucine by the dioxygenase gloC/GLOXY4 to yield pneumocandin A0) are sequentially added to the growing chain. The last C domain of gloA/GLNRPS4 is proposed to be responsible for cyclization by condensation to form the peptide bond between L-ornithine and 3S-hydroxyl-4S-methyl-L-proline (for pneumocandin A0) or 3S-hydroxyl-L-proline (for pneumocandin B0). Finally, the subsequent C-4 hydroxylation of 3S-hydroxyl-L-homotyrosine and L-ornithine dihydroxylation at C-4 and C-5 are performed by the cytochrome P450 monooxygenases gloP/GLP450-1 and gloO/GLP450-2, respectively. In Glarea lozoyensis (strain ATCC 20868 / MF5171), this protein is Cytochrome P450 monooxygenase gloO.